The sequence spans 150 residues: 6,7-dimethyl-8-ribityllumazine synthase (150 aa).

5-amino-6-(D-ribitylamino)uracil-binding positions include F11, 43 to 45, and 67 to 69; these read VFD and AVI. 72–73 lines the (2S)-2-hydroxy-3-oxobutyl phosphate pocket; that stretch reads AT. The Proton donor role is filled by H75. L100 is a binding site for 5-amino-6-(D-ribitylamino)uracil. R115 contacts (2S)-2-hydroxy-3-oxobutyl phosphate.

It belongs to the DMRL synthase family.

The enzyme catalyses (2S)-2-hydroxy-3-oxobutyl phosphate + 5-amino-6-(D-ribitylamino)uracil = 6,7-dimethyl-8-(1-D-ribityl)lumazine + phosphate + 2 H2O + H(+). It functions in the pathway cofactor biosynthesis; riboflavin biosynthesis; riboflavin from 2-hydroxy-3-oxobutyl phosphate and 5-amino-6-(D-ribitylamino)uracil: step 1/2. Functionally, catalyzes the formation of 6,7-dimethyl-8-ribityllumazine by condensation of 5-amino-6-(D-ribitylamino)uracil with 3,4-dihydroxy-2-butanone 4-phosphate. This is the penultimate step in the biosynthesis of riboflavin. The sequence is that of 6,7-dimethyl-8-ribityllumazine synthase from Pyrobaculum calidifontis (strain DSM 21063 / JCM 11548 / VA1).